Consider the following 160-residue polypeptide: Large ribosomal subunit protein uL15 (160 aa).

Residues 1–13 (MKLHELSDNDGAA) are compositionally biased toward basic and acidic residues. The disordered stretch occupies residues 1–42 (MKLHELSDNDGAAKKRKRVGRGPGSGTGKMGGRGIKGQKSRS). The segment covering 21 to 35 (RGPGSGTGKMGGRGI) has biased composition (gly residues).

The protein belongs to the universal ribosomal protein uL15 family. Part of the 50S ribosomal subunit.

In terms of biological role, binds to the 23S rRNA. The chain is Large ribosomal subunit protein uL15 from Roseobacter denitrificans (strain ATCC 33942 / OCh 114) (Erythrobacter sp. (strain OCh 114)).